The primary structure comprises 447 residues: Argininosuccinate synthase (447 aa).

Residues 17–25 (AFSGGLDTS) and alanine 43 each bind ATP. L-citrulline is bound at residue tyrosine 99. ATP is bound by residues glycine 129 and threonine 131. L-aspartate is bound by residues threonine 131, asparagine 135, and aspartate 136. L-citrulline is bound at residue asparagine 135. Aspartate 136 contributes to the ATP binding site. The L-citrulline site is built by arginine 139 and serine 192. Aspartate 194 contributes to the ATP binding site. Threonine 201, glutamate 203, and glutamate 280 together coordinate L-citrulline.

This sequence belongs to the argininosuccinate synthase family. Type 2 subfamily. Homotetramer.

Its subcellular location is the cytoplasm. The enzyme catalyses L-citrulline + L-aspartate + ATP = 2-(N(omega)-L-arginino)succinate + AMP + diphosphate + H(+). Its pathway is amino-acid biosynthesis; L-arginine biosynthesis; L-arginine from L-ornithine and carbamoyl phosphate: step 2/3. The protein is Argininosuccinate synthase of Shigella dysenteriae serotype 1 (strain Sd197).